A 180-amino-acid chain; its full sequence is Bifunctional protein PyrR (180 aa).

Residues 101 to 113 carry the PRPP-binding motif; that stretch reads VILVDDVLYTGRT.

The protein belongs to the purine/pyrimidine phosphoribosyltransferase family. PyrR subfamily. As to quaternary structure, homodimer and homohexamer; in equilibrium.

It carries out the reaction UMP + diphosphate = 5-phospho-alpha-D-ribose 1-diphosphate + uracil. Its function is as follows. Regulates transcriptional attenuation of the pyrimidine nucleotide (pyr) operon by binding in a uridine-dependent manner to specific sites on pyr mRNA. This disrupts an antiterminator hairpin in the RNA and favors formation of a downstream transcription terminator, leading to a reduced expression of downstream genes. In terms of biological role, also displays a weak uracil phosphoribosyltransferase activity which is not physiologically significant. This chain is Bifunctional protein PyrR, found in Bacillus cereus (strain ATCC 14579 / DSM 31 / CCUG 7414 / JCM 2152 / NBRC 15305 / NCIMB 9373 / NCTC 2599 / NRRL B-3711).